The sequence spans 622 residues: DNA mismatch repair protein MutL (622 aa).

Belongs to the DNA mismatch repair MutL/HexB family.

Functionally, this protein is involved in the repair of mismatches in DNA. It is required for dam-dependent methyl-directed DNA mismatch repair. May act as a 'molecular matchmaker', a protein that promotes the formation of a stable complex between two or more DNA-binding proteins in an ATP-dependent manner without itself being part of a final effector complex. The sequence is that of DNA mismatch repair protein MutL from Actinobacillus pleuropneumoniae serotype 3 (strain JL03).